Consider the following 403-residue polypeptide: Argininosuccinate synthase (403 aa).

Alanine 9–serine 17 serves as a coordination point for ATP. Residue tyrosine 86 participates in L-citrulline binding. Glycine 116 lines the ATP pocket. Residues threonine 118, asparagine 122, and aspartate 123 each coordinate L-aspartate. Asparagine 122 serves as a coordination point for L-citrulline. Positions 126, 174, 259, and 271 each coordinate L-citrulline.

The protein belongs to the argininosuccinate synthase family. Type 1 subfamily. Homotetramer.

It is found in the cytoplasm. The catalysed reaction is L-citrulline + L-aspartate + ATP = 2-(N(omega)-L-arginino)succinate + AMP + diphosphate + H(+). It functions in the pathway amino-acid biosynthesis; L-arginine biosynthesis; L-arginine from L-ornithine and carbamoyl phosphate: step 2/3. The sequence is that of Argininosuccinate synthase from Ligilactobacillus salivarius (strain UCC118) (Lactobacillus salivarius).